A 473-amino-acid polypeptide reads, in one-letter code: Catalase easC (473 aa).

The span at 1-15 (MASEVSVASSGSEHS) shows a compositional bias: low complexity. Positions 1-31 (MASEVSVASSGSEHSGAQKCPFQDPGLSSMD) are disordered. Residue H54 is part of the active site. Residue Y344 participates in heme binding. Residues 369–388 (DGARPEKAEMAPQKVPSQEH) form a disordered region.

It belongs to the catalase family. It depends on heme as a cofactor.

Its pathway is alkaloid biosynthesis; ergot alkaloid biosynthesis. Functionally, catalase; part of the gene cluster that mediates the biosynthesis of fungal ergot alkaloid. DmaW catalyzes the first step of ergot alkaloid biosynthesis by condensing dimethylallyl diphosphate (DMAP) and tryptophan to form 4-dimethylallyl-L-tryptophan. The second step is catalyzed by the methyltransferase easF that methylates 4-dimethylallyl-L-tryptophan in the presence of S-adenosyl-L-methionine, resulting in the formation of 4-dimethylallyl-L-abrine. The catalase easC and the FAD-dependent oxidoreductase easE then transform 4-dimethylallyl-L-abrine to chanoclavine-I which is further oxidized by easD in the presence of NAD(+), resulting in the formation of chanoclavine-I aldehyde. Agroclavine dehydrogenase easG then mediates the conversion of chanoclavine-I aldehyde to agroclavine via a non-enzymatic adduct reaction: the substrate is an iminium intermediate that is formed spontaneously from chanoclavine-I aldehyde in the presence of glutathione. The presence of easA is not required to complete this reaction. Further conversion of agroclavine to paspalic acid is a two-step process involving oxidation of agroclavine to elymoclavine and of elymoclavine to paspalic acid, the second step being performed by the elymoclavine oxidase cloA. Paspalic acid is then further converted to D-lysergic acid. Ergopeptines are assembled from D-lysergic acid and three different amino acids by the D-lysergyl-peptide-synthetases composed each of a monomudular and a trimodular nonribosomal peptide synthetase subunit. LpsB and lpsC encode the monomodular subunits responsible for D-lysergic acid activation and incorporation into the ergopeptine backbone. LpsA1 and A2 subunits encode the trimodular nonribosomal peptide synthetase assembling the tripeptide portion of ergopeptines. LpsA1 is responsible for formation of the major ergopeptine, ergotamine, and lpsA2 for alpha-ergocryptine, the minor ergopeptine of the total alkaloid mixture elaborated by C.purpurea. D-lysergyl-tripeptides are assembled by the nonribosomal peptide synthetases and released as N-(D-lysergyl-aminoacyl)-lactams. Cyclolization of the D-lysergyl-tripeptides is performed by the Fe(2+)/2-ketoglutarate-dependent dioxygenase easH which introduces a hydroxyl group into N-(D-lysergyl-aminoacyl)-lactam at alpha-C of the aminoacyl residue followed by spontaneous condensation with the terminal lactam carbonyl group. In Claviceps purpurea (Ergot fungus), this protein is Catalase easC.